The primary structure comprises 456 residues: GTPase Der (456 aa).

EngA-type G domains lie at 4 to 169 (PIVA…PSKE) and 178 to 353 (IQLA…EQHR). Residues 10–17 (GRPNVGKS), 57–61 (DTGGL), 120–123 (NKCE), 184–191 (GRPNVGKS), 231–235 (DTAGI), and 296–299 (NKWD) contribute to the GTP site. One can recognise a KH-like domain in the interval 354 to 439 (RRVSTSVVNE…PLKLFWRGKQ (86 aa)).

This sequence belongs to the TRAFAC class TrmE-Era-EngA-EngB-Septin-like GTPase superfamily. EngA (Der) GTPase family. As to quaternary structure, associates with the 50S ribosomal subunit.

GTPase that plays an essential role in the late steps of ribosome biogenesis. This Prochlorococcus marinus (strain MIT 9211) protein is GTPase Der.